The sequence spans 87 residues: Acyl-CoA-binding protein (87 aa).

N-acetylserine is present on Ser2. Residues Ser2–Ile87 form the ACB domain. An N6-acetyllysine; alternate modification is found at Lys8. Lys8 is subject to N6-succinyllysine; alternate. Lys14 is a binding site for an acyl-CoA. The residue at position 17 (Lys17) is an N6-succinyllysine. N6-acetyllysine is present on Lys19. Phosphotyrosine is present on Tyr29. Residues Tyr29 to Lys33, Lys51, Lys55, and Tyr74 contribute to the an acyl-CoA site. Residue Lys51 is modified to N6-acetyllysine. An N6-acetyllysine; alternate modification is found at Lys55. An N6-succinyllysine; alternate modification is found at Lys55. Lys55 carries the post-translational modification N6-(2-hydroxyisobutyryl)lysine; alternate. At Lys55 the chain carries N6-malonyllysine; alternate. N6-acetyllysine; alternate is present on Lys77. The residue at position 77 (Lys77) is an N6-succinyllysine; alternate.

The protein belongs to the ACBP family. Monomer.

It is found in the endoplasmic reticulum. The protein localises to the golgi apparatus. Binds medium- and long-chain acyl-CoA esters with very high affinity and may function as an intracellular carrier of acyl-CoA esters. It is also able to displace diazepam from the benzodiazepine (BZD) recognition site located on the GABA type A receptor. It is therefore possible that this protein also acts as a neuropeptide to modulate the action of the GABA receptor. Its function is as follows. DBI(32-86) has antibacterial properties. The polypeptide is Acyl-CoA-binding protein (DBI) (Sus scrofa (Pig)).